The following is a 370-amino-acid chain: Dual-specificity RNA methyltransferase RlmN (370 aa).

The active-site Proton acceptor is the Glu-93. Positions Glu-99–Asp-337 constitute a Radical SAM core domain. Cys-106 and Cys-343 form a disulfide bridge. 3 residues coordinate [4Fe-4S] cluster: Cys-113, Cys-117, and Cys-120. S-adenosyl-L-methionine is bound by residues Gly-167–Glu-168, Ser-199, Ser-221–His-223, and Asn-300. Cys-343 serves as the catalytic S-methylcysteine intermediate.

It belongs to the radical SAM superfamily. RlmN family. It depends on [4Fe-4S] cluster as a cofactor.

Its subcellular location is the cytoplasm. It carries out the reaction adenosine(2503) in 23S rRNA + 2 reduced [2Fe-2S]-[ferredoxin] + 2 S-adenosyl-L-methionine = 2-methyladenosine(2503) in 23S rRNA + 5'-deoxyadenosine + L-methionine + 2 oxidized [2Fe-2S]-[ferredoxin] + S-adenosyl-L-homocysteine. It catalyses the reaction adenosine(37) in tRNA + 2 reduced [2Fe-2S]-[ferredoxin] + 2 S-adenosyl-L-methionine = 2-methyladenosine(37) in tRNA + 5'-deoxyadenosine + L-methionine + 2 oxidized [2Fe-2S]-[ferredoxin] + S-adenosyl-L-homocysteine. Specifically methylates position 2 of adenine 2503 in 23S rRNA and position 2 of adenine 37 in tRNAs. m2A2503 modification seems to play a crucial role in the proofreading step occurring at the peptidyl transferase center and thus would serve to optimize ribosomal fidelity. The chain is Dual-specificity RNA methyltransferase RlmN from Francisella tularensis subsp. novicida (strain U112).